A 101-amino-acid chain; its full sequence is NADH-quinone oxidoreductase subunit K (101 aa).

Helical transmembrane passes span 4–24 (LPHY…GIFV), 30–50 (IVIL…LVAF), and 61–81 (IFAM…LAIL).

It belongs to the complex I subunit 4L family. In terms of assembly, NDH-1 is composed of 14 different subunits. Subunits NuoA, H, J, K, L, M, N constitute the membrane sector of the complex.

The protein localises to the cell inner membrane. The catalysed reaction is a quinone + NADH + 5 H(+)(in) = a quinol + NAD(+) + 4 H(+)(out). Functionally, NDH-1 shuttles electrons from NADH, via FMN and iron-sulfur (Fe-S) centers, to quinones in the respiratory chain. The immediate electron acceptor for the enzyme in this species is believed to be ubiquinone. Couples the redox reaction to proton translocation (for every two electrons transferred, four hydrogen ions are translocated across the cytoplasmic membrane), and thus conserves the redox energy in a proton gradient. The polypeptide is NADH-quinone oxidoreductase subunit K (Caulobacter vibrioides (strain ATCC 19089 / CIP 103742 / CB 15) (Caulobacter crescentus)).